Reading from the N-terminus, the 450-residue chain is Ribosomal protein uS12 methylthiotransferase RimO (450 aa).

An MTTase N-terminal domain is found at 16–126 (PRISFVSLGC…VLDAVHQAVP (111 aa)). C25, C61, C90, C157, C161, and C164 together coordinate [4Fe-4S] cluster. In terms of domain architecture, Radical SAM core spans 143–380 (LTPRHYAYLK…MLKQQAISAR (238 aa)). In terms of domain architecture, TRAM spans 383–449 (KRKVGTRQQV…AYDLIGSAVG (67 aa)).

Belongs to the methylthiotransferase family. RimO subfamily. [4Fe-4S] cluster is required as a cofactor.

The protein localises to the cytoplasm. The enzyme catalyses L-aspartate(89)-[ribosomal protein uS12]-hydrogen + (sulfur carrier)-SH + AH2 + 2 S-adenosyl-L-methionine = 3-methylsulfanyl-L-aspartate(89)-[ribosomal protein uS12]-hydrogen + (sulfur carrier)-H + 5'-deoxyadenosine + L-methionine + A + S-adenosyl-L-homocysteine + 2 H(+). Functionally, catalyzes the methylthiolation of an aspartic acid residue of ribosomal protein uS12. The sequence is that of Ribosomal protein uS12 methylthiotransferase RimO from Azorhizobium caulinodans (strain ATCC 43989 / DSM 5975 / JCM 20966 / LMG 6465 / NBRC 14845 / NCIMB 13405 / ORS 571).